Consider the following 422-residue polypeptide: Solanesyl diphosphate synthase 3, chloroplastic/mitochondrial (422 aa).

Residues 1-32 (MLFTRSVARISSKFLRNRSFYGSSQSLASHRF) constitute a chloroplast and mitochondrion transit peptide. 3 residues coordinate isopentenyl diphosphate: Lys125, Arg128, and His174. Mg(2+)-binding residues include Asp181 and Asp185. Arg190 is a binding site for an all-trans-polyprenyl diphosphate. Isopentenyl diphosphate is bound at residue Arg191. An all-trans-polyprenyl diphosphate contacts are provided by Lys267, Thr268, Gln305, and Lys322.

Belongs to the FPP/GGPP synthase family. As to quaternary structure, homodimer. Mg(2+) serves as cofactor. Ubiquitous. Highest expression in seeds and shoot apical meristem.

The protein resides in the plastid. It localises to the chloroplast. It is found in the mitochondrion. It carries out the reaction 5 isopentenyl diphosphate + (2E,6E,10E)-geranylgeranyl diphosphate = all-trans-nonaprenyl diphosphate + 5 diphosphate. In terms of biological role, may be involved in the supply of solanesyl diphosphate for ubiquinone-9 (UQ-9) biosynthesis in mitochondria. Synthesizes C25 to C45 medium / long-chain products depending on the type of substrate available. Can use geranyl diphosphate, farnesyl diphosphate or geranylgeranyl diphosphate as substrates, but not dimethylallyl diphosphate. The polypeptide is Solanesyl diphosphate synthase 3, chloroplastic/mitochondrial (Arabidopsis thaliana (Mouse-ear cress)).